We begin with the raw amino-acid sequence, 246 residues long: UDP-N-acetyl-D-mannosaminuronic acid transferase (246 aa).

It belongs to the glycosyltransferase 26 family.

The catalysed reaction is UDP-N-acetyl-alpha-D-mannosaminouronate + N-acetyl-alpha-D-glucosaminyl-di-trans,octa-cis-undecaprenyl diphosphate = beta-D-ManNAcA-(1-&gt;4)-alpha-D-GlcNAc-di-trans,octa-cis-undecaprenyl diphosphate + UDP + H(+). It functions in the pathway bacterial outer membrane biogenesis; enterobacterial common antigen biosynthesis. Catalyzes the synthesis of Und-PP-GlcNAc-ManNAcA (Lipid II), the second lipid-linked intermediate involved in enterobacterial common antigen (ECA) synthesis. This is UDP-N-acetyl-D-mannosaminuronic acid transferase from Citrobacter koseri (strain ATCC BAA-895 / CDC 4225-83 / SGSC4696).